The primary structure comprises 510 residues: Ribonuclease Y (510 aa).

The chain crosses the membrane as a helical span at residues 4–24 (LLWAVVALLAGLAGGAGIGVY). A KH domain is found at 200-260 (TVSTVNLPSE…VRREVARVAL (61 aa)). The HD domain occupies 326–419 (VLQHSLECAL…VIAADAISGA (94 aa)).

It belongs to the RNase Y family.

Its subcellular location is the cell membrane. Functionally, endoribonuclease that initiates mRNA decay. The protein is Ribonuclease Y of Chloroflexus aurantiacus (strain ATCC 29366 / DSM 635 / J-10-fl).